The primary structure comprises 197 residues: Adenylylsulfatase HINT3 (197 aa).

Residues 14-43 form a disordered region; that stretch reads NPPGPNPTRDPTLRVSDCSSGSSGDGKVES. The 108-residue stretch at 51-158 folds into the HIT domain; the sequence is VFCKIIRGES…IPRKERDCLW (108 aa). The Histidine triad motif motif lies at 143–147; it reads HTHIH. His-145 acts as the Tele-AMP-histidine intermediate in catalysis. His-147 serves as a coordination point for substrate.

The protein localises to the peroxisome. The enzyme catalyses adenosine 5'-phosphosulfate + H2O = sulfate + AMP + 2 H(+). Possesses adenylylsulfatase activity in vitro. This Arabidopsis thaliana (Mouse-ear cress) protein is Adenylylsulfatase HINT3.